The chain runs to 408 residues: WD repeat-containing protein 55 homolog (408 aa).

WD repeat units lie at residues Ser-17–Lys-56, Pro-61–Thr-100, Ala-104–Glu-141, Glu-144–Ser-183, Ser-186–Lys-224, Gly-227–Val-265, and Glu-268–Glu-308. Positions Glu-308 to Leu-408 are disordered. 2 stretches are compositionally biased toward acidic residues: residues Ile-322–Glu-339 and Asp-347–Asp-373.

It belongs to the WD repeat WDR55 family.

The polypeptide is WD repeat-containing protein 55 homolog (wdr55) (Dictyostelium discoideum (Social amoeba)).